The chain runs to 242 residues: MNQVLTQSRPIRLKGRSFLALVLSPELPLDGWLDKLDDLAARSVGFFLNRPIVLDLENVSIERPQLVQLLEDLVKRGVWITGFENARPSLLGPGMPPAMRGGQPAADFDPEITEPKSQERTPVAPASVQLVKAVPSMVVTEPVRSGQSVYFPDGDVTIVGSVASGAEVVAGGSIHVYGALRGRAMAGTAGNADARIFCRKMEAELVAIDGLYKTAEDMESRLRGQAVQLWLDGDYMMAETLN.

Belongs to the MinC family. Interacts with MinD and FtsZ.

Functionally, cell division inhibitor that blocks the formation of polar Z ring septums. Rapidly oscillates between the poles of the cell to destabilize FtsZ filaments that have formed before they mature into polar Z rings. Prevents FtsZ polymerization. The sequence is that of Probable septum site-determining protein MinC from Brucella anthropi (strain ATCC 49188 / DSM 6882 / CCUG 24695 / JCM 21032 / LMG 3331 / NBRC 15819 / NCTC 12168 / Alc 37) (Ochrobactrum anthropi).